The following is a 288-amino-acid chain: Bifunctional protein FolD (288 aa).

Residues 164 to 166 (GRS) and valine 230 each bind NADP(+).

The protein belongs to the tetrahydrofolate dehydrogenase/cyclohydrolase family. In terms of assembly, homodimer.

The enzyme catalyses (6R)-5,10-methylene-5,6,7,8-tetrahydrofolate + NADP(+) = (6R)-5,10-methenyltetrahydrofolate + NADPH. The catalysed reaction is (6R)-5,10-methenyltetrahydrofolate + H2O = (6R)-10-formyltetrahydrofolate + H(+). The protein operates within one-carbon metabolism; tetrahydrofolate interconversion. Functionally, catalyzes the oxidation of 5,10-methylenetetrahydrofolate to 5,10-methenyltetrahydrofolate and then the hydrolysis of 5,10-methenyltetrahydrofolate to 10-formyltetrahydrofolate. The polypeptide is Bifunctional protein FolD (Thermomicrobium roseum (strain ATCC 27502 / DSM 5159 / P-2)).